The chain runs to 240 residues: MYKILRLIQENQQITSHDDLENVLNGLNNLIGHEFFLFGLSFQPTLKTSETLVTDNYPNSWRQQYDESGFMHIDPIVKYSITNFLPIRWDDAKRVNNDGRVIFEEARCNGLKAGFSIPIHGLRGEFGMISFATSDTKSYDLNQQSIHTSQLIVPLLAHNIGNITRYHKDAKPRAVLTAREVQCLAWAAEGKSAWEIATIINTSERTVKFHFSNACKKLGATNRYQAITKAILGGYINPYL.

An HTH luxR-type domain is found at 169–234 (DAKPRAVLTA…QAITKAILGG (66 aa)). Positions 193–212 (AWEIATIINTSERTVKFHFS) form a DNA-binding region, H-T-H motif.

This sequence belongs to the autoinducer-regulated transcriptional regulatory protein family.

Its function is as follows. Probable transcriptional activator. Binds to autoinducer molecule ODHL. The sequence is that of Transcriptional activator protein VanR (vanR) from Vibrio anguillarum (Listonella anguillarum).